An 879-amino-acid polypeptide reads, in one-letter code: Pyruvate dehydrogenase phosphatase regulatory subunit, mitochondrial (879 aa).

The transit peptide at 1–27 (MMFYRLLSIVGRQRASPGWQNWSSARN) directs the protein to the mitochondrion.

It belongs to the GcvT family. Heterodimer of a catalytic (PDP1) and a regulatory (PDPR) subunit.

Its subcellular location is the mitochondrion matrix. Decreases the sensitivity of PDP1 to magnesium ions, and this inhibition is reversed by the polyamine spermine. The polypeptide is Pyruvate dehydrogenase phosphatase regulatory subunit, mitochondrial (PDPR) (Homo sapiens (Human)).